The sequence spans 437 residues: C-terminal-binding protein 2 (437 aa).

Residues serine 103, 183–188, aspartate 207, 240–246, 267–269, and aspartate 293 each bind NAD(+); these read IGLGRI, CNLNEHN, and TAR. Arginine 269 is an active-site residue. Glutamate 298 is a catalytic residue. Residue histidine 318 is the Proton donor of the active site. NAD(+) is bound at residue 318 to 321; that stretch reads HTAW. Positions 410-437 are disordered; that stretch reads PLIPSVSHTPSPGQTTKPDPDREIPTDQ. The segment covering 415 to 426 has biased composition (polar residues); sequence VSHTPSPGQTTK. The span at 427–437 shows a compositional bias: basic and acidic residues; that stretch reads PDPDREIPTDQ.

This sequence belongs to the D-isomer specific 2-hydroxyacid dehydrogenase family. In terms of assembly, interacts with the C-terminus of tcf7l1-a via the consensus motifs P-X-[DNS]-L-[STVA].

It is found in the nucleus. Functionally, corepressor targeting diverse transcription regulators. The protein is C-terminal-binding protein 2 (ctbp2) of Xenopus laevis (African clawed frog).